Consider the following 203-residue polypeptide: Putative 3-methyladenine DNA glycosylase (203 aa).

This sequence belongs to the DNA glycosylase MPG family.

This Clostridium botulinum (strain Langeland / NCTC 10281 / Type F) protein is Putative 3-methyladenine DNA glycosylase.